The sequence spans 180 residues: UPF0340 protein RBAM_034070 (180 aa).

Belongs to the UPF0340 family.

The protein is UPF0340 protein RBAM_034070 of Bacillus velezensis (strain DSM 23117 / BGSC 10A6 / LMG 26770 / FZB42) (Bacillus amyloliquefaciens subsp. plantarum).